Reading from the N-terminus, the 386-residue chain is Chaperone protein DnaJ (386 aa).

The region spanning 5–69 (DLYDVLGVKK…QKRAQYDQFG (65 aa)) is the J domain. The CR-type zinc-finger motif lies at 140–224 (GKETSIKYNR…CHGAGVTEER (85 aa)). Zn(2+) contacts are provided by Cys153, Cys156, Cys170, Cys173, Cys196, Cys199, Cys212, and Cys215. CXXCXGXG motif repeat units follow at residues 153–160 (CHTCHGSG), 170–177 (CSTCHGQG), 196–203 (CPTCGGKG), and 212–219 (CDTCHGAG).

The protein belongs to the DnaJ family. In terms of assembly, homodimer. Requires Zn(2+) as cofactor.

Its subcellular location is the cytoplasm. Functionally, participates actively in the response to hyperosmotic and heat shock by preventing the aggregation of stress-denatured proteins and by disaggregating proteins, also in an autonomous, DnaK-independent fashion. Unfolded proteins bind initially to DnaJ; upon interaction with the DnaJ-bound protein, DnaK hydrolyzes its bound ATP, resulting in the formation of a stable complex. GrpE releases ADP from DnaK; ATP binding to DnaK triggers the release of the substrate protein, thus completing the reaction cycle. Several rounds of ATP-dependent interactions between DnaJ, DnaK and GrpE are required for fully efficient folding. Also involved, together with DnaK and GrpE, in the DNA replication of plasmids through activation of initiation proteins. The protein is Chaperone protein DnaJ of Limosilactobacillus fermentum (strain NBRC 3956 / LMG 18251) (Lactobacillus fermentum).